The primary structure comprises 887 residues: PAN2-PAN3 deadenylation complex subunit Pan3 (887 aa).

A C3H1-type zinc finger spans residues 49-77; that stretch reads GVKLKYCRYYAKDKTCFYGEECQFLHEDP. Disordered stretches follow at residues 111–139, 280–307, and 321–393; these read GGGAGPPAGPKKPELGVPGAATAGGGLDG, ENNLQTPNPTASEFIPKGGSTSRLSNVS, and PSMG…GQVI. The tract at residues 147-498 is necessary and sufficient for interaction with PABPC1 but not needed for interaction with PAN2; the sequence is MDGGALTDAS…PPPNRIQKSS (352 aa). Polar residues-rich tracts occupy residues 281–290 and 298–307; these read NNLQTPNPTA and GSTSRLSNVS. A PABPC-interacting motif-2 (PAM-2) motif is present at residues 284–299; it reads QTPNPTASEFIPKGGS. Phosphoserine is present on residues Ser354 and Ser361. Residues 463 to 750 form a pseudokinase domain region; sequence QIDQADMPAV…SVNDIMPMIG (288 aa). ATP is bound by residues Arg521, 570–577, and 644–645; these read DFHAGGET and TK. A knob domain region spans residues 789–887; sequence TINERPEFQK…ELIAAANGQL (99 aa).

The protein belongs to the protein kinase superfamily. PAN3 family. As to quaternary structure, homodimer. Forms a heterotrimer with a catalytic subunit PAN2 to form the poly(A)-nuclease (PAN) deadenylation complex. Interacts (via PAM-2 motif) with poly(A)-binding protein PABPC1 (via PABC domain), conferring substrate specificity of the enzyme complex. Interacts with the GW182 family proteins TNRC6A, TNRC6B and TNRC6C. Interacts with YTHDF3. In terms of assembly, interacts with PAN2. Interacts (via N-terminus) with PABPC1 at lower efficiency than isoform 3. Interacts with PAN2. Interacts (via N-terminus) with PABPC1 at higher efficiency than isoform 1.

The protein resides in the cytoplasm. Its subcellular location is the P-body. The protein localises to the nucleus. In terms of biological role, regulatory subunit of the poly(A)-nuclease (PAN) deadenylation complex, one of two cytoplasmic mRNA deadenylases involved in general and miRNA-mediated mRNA turnover. PAN specifically shortens poly(A) tails of RNA and the activity is stimulated by poly(A)-binding protein (PABP). PAN deadenylation is followed by rapid degradation of the shortened mRNA tails by the CCR4-NOT complex. Deadenylated mRNAs are then degraded by two alternative mechanisms, namely exosome-mediated 3'-5' exonucleolytic degradation, or deadenylation-dependent mRNA decapping and subsequent 5'-3' exonucleolytic degradation by XRN1. PAN3 acts as a regulator for PAN activity, recruiting the catalytic subunit PAN2 to mRNA via its interaction with RNA and PABP, and to miRNA targets via its interaction with GW182 family proteins. Decreases PAN2-mediated deadenylation, possibly by preventing progression into the second CCR4-NOT mediated stage of biphasic deadenylation. Has a significant effect on mRNA stability, generally stabilizing a subset of the transcriptome. Stabilizes mRNAs degraded by the AU-rich element (ARE)-mediated mRNA decay pathway but promotes degradation of mRNAs by the microRNA-mediated pathway. Its activity influences mRNP remodeling, specifically reducing formation of a subset of P-bodies containing GW220, an isoform of TNRC6A. Its function is as follows. Enhances PAN2 deadenylase activity and has an extensive effect on mRNA stability, generally enhancing mRNA decay across the transcriptome by multiple pathways, including the AU-rich element (ARE)-mediated pathway, microRNA-mediated pathway and the nonsense-mediated pathway (NMD). Its activity is required for efficient P-body formation. May be involved in regulating mRNAs of genes involved in cell cycle progression and cell proliferation. This chain is PAN2-PAN3 deadenylation complex subunit Pan3, found in Mus musculus (Mouse).